Consider the following 83-residue polypeptide: Cell division topological specificity factor (83 aa).

This sequence belongs to the MinE family.

Prevents the cell division inhibition by proteins MinC and MinD at internal division sites while permitting inhibition at polar sites. This ensures cell division at the proper site by restricting the formation of a division septum at the midpoint of the long axis of the cell. In Bordetella parapertussis (strain 12822 / ATCC BAA-587 / NCTC 13253), this protein is Cell division topological specificity factor.